Here is a 347-residue protein sequence, read N- to C-terminus: Probable nitronate monooxygenase (347 aa).

FMN is bound by residues asparagine 69, glutamine 171, glycine 176, glycine 213, and 232-235 (QIGS).

This sequence belongs to the nitronate monooxygenase family. NMO class I subfamily. FMN serves as cofactor.

The catalysed reaction is 3 propionate 3-nitronate + 3 O2 + H2O = 3 3-oxopropanoate + 2 nitrate + nitrite + H2O2 + 3 H(+). In terms of biological role, nitronate monooxygenase that uses molecular oxygen to catalyze the oxidative denitrification of alkyl nitronates. Acts on propionate 3-nitronate (P3N), the presumed physiological substrate. Probably functions in the detoxification of P3N, a metabolic poison produced by plants and fungi as a defense mechanism. This is Probable nitronate monooxygenase (yrpB) from Bacillus subtilis (strain 168).